The following is a 308-amino-acid chain: Cytochrome b (308 aa).

4 consecutive transmembrane segments (helical) span residues 1–21 (FGLLLGICLIVQIVTGLLLAA), 45–66 (WLIRNLHANGASFFFICIYLHI), 81–101 (WNIGVILLLTLMATAFVGYVL), and 146–166 (FFALHFLLPFVIAGLTLVHLT). The heme b site is built by His-51 and His-65. Heme b contacts are provided by His-150 and His-164. Residue His-169 participates in a ubiquinone binding. The next 3 helical transmembrane spans lie at 194–214 (TKDMLGFALMLIPLITLALFS), 256–276 (LGGVLALAASVLVLFLIPLLH), and 288–308 (LSQILFWTLVANLLVLTWVGS).

Belongs to the cytochrome b family. As to quaternary structure, the cytochrome bc1 complex contains 11 subunits: 3 respiratory subunits (MT-CYB, CYC1 and UQCRFS1), 2 core proteins (UQCRC1 and UQCRC2) and 6 low-molecular weight proteins (UQCRH/QCR6, UQCRB/QCR7, UQCRQ/QCR8, UQCR10/QCR9, UQCR11/QCR10 and a cleavage product of UQCRFS1). This cytochrome bc1 complex then forms a dimer. Requires heme b as cofactor.

Its subcellular location is the mitochondrion inner membrane. Functionally, component of the ubiquinol-cytochrome c reductase complex (complex III or cytochrome b-c1 complex) that is part of the mitochondrial respiratory chain. The b-c1 complex mediates electron transfer from ubiquinol to cytochrome c. Contributes to the generation of a proton gradient across the mitochondrial membrane that is then used for ATP synthesis. In Pomatostomus temporalis (Grey-crowned babbler), this protein is Cytochrome b (MT-CYB).